A 487-amino-acid chain; its full sequence is 3-octaprenyl-4-hydroxybenzoate carboxy-lyase (487 aa).

A Mn(2+)-binding site is contributed by Asn172. Prenylated FMN-binding positions include 175–177 (IYR), 189–191 (RWL), and 194–195 (RG). Glu238 contacts Mn(2+). Asp287 acts as the Proton donor in catalysis.

This sequence belongs to the UbiD family. Homohexamer. Prenylated FMN serves as cofactor. Mn(2+) is required as a cofactor.

It is found in the cell membrane. The enzyme catalyses a 4-hydroxy-3-(all-trans-polyprenyl)benzoate + H(+) = a 2-(all-trans-polyprenyl)phenol + CO2. Its pathway is cofactor biosynthesis; ubiquinone biosynthesis. Its function is as follows. Catalyzes the decarboxylation of 3-octaprenyl-4-hydroxy benzoate to 2-octaprenylphenol, an intermediate step in ubiquinone biosynthesis. This chain is 3-octaprenyl-4-hydroxybenzoate carboxy-lyase, found in Actinobacillus pleuropneumoniae serotype 5b (strain L20).